We begin with the raw amino-acid sequence, 78 residues long: Acyl carrier protein (78 aa).

In terms of domain architecture, Carrier spans 2–77; that stretch reads SDIAERVKKI…DAIKFLEKNS (76 aa). Ser-37 bears the O-(pantetheine 4'-phosphoryl)serine mark.

Belongs to the acyl carrier protein (ACP) family. 4'-phosphopantetheine is transferred from CoA to a specific serine of apo-ACP by AcpS. This modification is essential for activity because fatty acids are bound in thioester linkage to the sulfhydryl of the prosthetic group.

It localises to the cytoplasm. Its pathway is lipid metabolism; fatty acid biosynthesis. Functionally, carrier of the growing fatty acid chain in fatty acid biosynthesis. The polypeptide is Acyl carrier protein (Methylorubrum extorquens (strain CM4 / NCIMB 13688) (Methylobacterium extorquens)).